The chain runs to 173 residues: Crossover junction endodeoxyribonuclease RuvC (173 aa).

Active-site residues include Asp8, Glu67, and Asp139. Asp8, Glu67, and Asp139 together coordinate Mg(2+).

This sequence belongs to the RuvC family. In terms of assembly, homodimer which binds Holliday junction (HJ) DNA. The HJ becomes 2-fold symmetrical on binding to RuvC with unstacked arms; it has a different conformation from HJ DNA in complex with RuvA. In the full resolvosome a probable DNA-RuvA(4)-RuvB(12)-RuvC(2) complex forms which resolves the HJ. Requires Mg(2+) as cofactor.

Its subcellular location is the cytoplasm. The catalysed reaction is Endonucleolytic cleavage at a junction such as a reciprocal single-stranded crossover between two homologous DNA duplexes (Holliday junction).. Its function is as follows. The RuvA-RuvB-RuvC complex processes Holliday junction (HJ) DNA during genetic recombination and DNA repair. Endonuclease that resolves HJ intermediates. Cleaves cruciform DNA by making single-stranded nicks across the HJ at symmetrical positions within the homologous arms, yielding a 5'-phosphate and a 3'-hydroxyl group; requires a central core of homology in the junction. The consensus cleavage sequence is 5'-(A/T)TT(C/G)-3'. Cleavage occurs on the 3'-side of the TT dinucleotide at the point of strand exchange. HJ branch migration catalyzed by RuvA-RuvB allows RuvC to scan DNA until it finds its consensus sequence, where it cleaves and resolves the cruciform DNA. This chain is Crossover junction endodeoxyribonuclease RuvC, found in Vibrio vulnificus (strain YJ016).